Consider the following 316-residue polypeptide: Polyprenyl transferase prhE (316 aa).

9 consecutive transmembrane segments (helical) span residues 45-65, 69-89, 114-134, 135-155, 163-183, 188-208, 231-253, 257-276, and 296-316; these read VVGVAYTAAISPVTLPSTFLL, VILSLWGFCIRSAGCAWNDLI, GAALLAAFMFGCGGSLLLLLP, SQCAFEAAIVVFFALLYPFGK, LILTNIAWAIPMAMSSLDMSP, IPTLAMSFSIASVIVMIDIVY, ITDQIAYGLFFSGTLSLLVGGIL, GFPFLIFSVGGHFLGFLRFL, and SCLLATMLLVFGLCFEYCVRL.

The protein belongs to the UbiA prenyltransferase family. Mg(2+) serves as cofactor.

Its subcellular location is the membrane. The enzyme catalyses 3,5-dimethylorsellinate + (2E,6E)-farnesyl diphosphate = (3R)-3-farnesyl-6-hydroxy-2,3,5-trimethyl-4-oxocyclohexa-1,5-diene-1-carboxylate + diphosphate + H(+). The protein operates within secondary metabolite biosynthesis; terpenoid biosynthesis. Functionally, polyprenyl transferase; part of the gene cluster that mediates the biosynthesis of paraherquonin, a meroterpenoid with a unique, highly congested hexacyclic molecular architecture. The first step of the pathway is the synthesis of 3,5-dimethylorsellinic acid (DMOA) by the polyketide synthase prhL. Synthesis of DMOA is followed by farnesylation by the prenyltransferase prhE, methylesterification by the methyl-transferase prhM, epoxidation of the prenyl chain by the flavin-dependent monooxygenase prhF, and cyclization of the farnesyl moiety by the terpene cyclase prhH, to yield the tetracyclic intermediate, protoaustinoid A. The short chain dehydrogenase prhI then oxidizes the C-3 alcohol group of the terpene cyclase product to transform protoaustinoid A into protoaustinoid B. The FAD-binding monooxygenase prhJ catalyzes the oxidation of protoaustinoid B into preaustinoid A which is further oxidized into preaustinoid A1 by FAD-binding monooxygenase phrK. Finally, prhA leads to berkeleydione via the berkeleyone B intermediate. PrhA is a multifunctional dioxygenase that first desaturates at C5-C6 to form berkeleyone B, followed by rearrangement of the A/B-ring to form the cycloheptadiene moiety in berkeleydione. Berkeleydione serves as the key intermediate for the biosynthesis of paraherquonin as well as many other meroterpenoids. The cytochrome P450 monooxygenases prhB, prhD, and prhN, as well as the isomerase prhC, are probably involved in the late stage of paraherquonin biosynthesis, after the production of berkeleydione. Especially prhC might be a multifunctional enzyme that catalyzes the D-ring expansion via intramolecular methoxy rearrangement, as well as the hydrolysis of the expanded D-ring. This chain is Polyprenyl transferase prhE, found in Penicillium brasilianum.